We begin with the raw amino-acid sequence, 329 residues long: Phenylalanine--tRNA ligase alpha subunit (329 aa).

Glu-254 contributes to the Mg(2+) binding site.

Belongs to the class-II aminoacyl-tRNA synthetase family. Phe-tRNA synthetase alpha subunit type 1 subfamily. In terms of assembly, tetramer of two alpha and two beta subunits. The cofactor is Mg(2+).

It is found in the cytoplasm. The enzyme catalyses tRNA(Phe) + L-phenylalanine + ATP = L-phenylalanyl-tRNA(Phe) + AMP + diphosphate + H(+). The polypeptide is Phenylalanine--tRNA ligase alpha subunit (Histophilus somni (strain 129Pt) (Haemophilus somnus)).